Here is a 630-residue protein sequence, read N- to C-terminus: DNA topoisomerase 4 subunit B (630 aa).

Residues Tyr5, Asn42, Asp69, 110–116 (GLHGVGI), and Lys334 contribute to the ATP site. In terms of domain architecture, Toprim spans 412 to 525 (TELFLVEGDS…NGHVYVALPP (114 aa)). Mg(2+)-binding residues include Glu418, Asp490, and Asp492.

It belongs to the type II topoisomerase family. ParE type 1 subfamily. As to quaternary structure, heterotetramer composed of ParC and ParE. Requires Mg(2+) as cofactor. It depends on Mn(2+) as a cofactor. The cofactor is Ca(2+).

It carries out the reaction ATP-dependent breakage, passage and rejoining of double-stranded DNA.. Topoisomerase IV is essential for chromosome segregation. It relaxes supercoiled DNA. Performs the decatenation events required during the replication of a circular DNA molecule. In Salmonella typhi, this protein is DNA topoisomerase 4 subunit B.